Consider the following 311-residue polypeptide: Ornithine carbamoyltransferase (311 aa).

Carbamoyl phosphate-binding positions include Ser-54–Arg-58, Asn-81, Arg-104, and His-131–Gln-134. L-ornithine is bound by residues Asn-164, Asp-225, and Asp-229–Met-230. Carbamoyl phosphate-binding positions include His-268–Pro-271, Thr-279, and Arg-297.

This sequence belongs to the aspartate/ornithine carbamoyltransferase superfamily. OTCase family.

It is found in the cytoplasm. The catalysed reaction is carbamoyl phosphate + L-ornithine = L-citrulline + phosphate + H(+). It functions in the pathway amino-acid biosynthesis; L-arginine biosynthesis; L-arginine from L-ornithine and carbamoyl phosphate: step 1/3. Reversibly catalyzes the transfer of the carbamoyl group from carbamoyl phosphate (CP) to the N(epsilon) atom of ornithine (ORN) to produce L-citrulline. This is Ornithine carbamoyltransferase (argF) from Leptospira interrogans serogroup Icterohaemorrhagiae serovar copenhageni (strain Fiocruz L1-130).